The following is a 184-amino-acid chain: Ribosome maturation factor RimP (184 aa).

It belongs to the RimP family.

The protein localises to the cytoplasm. In terms of biological role, required for maturation of 30S ribosomal subunits. The protein is Ribosome maturation factor RimP of Zymomonas mobilis subsp. mobilis (strain ATCC 31821 / ZM4 / CP4).